The chain runs to 174 residues: Peptide deformylase (174 aa).

Residues cysteine 96 and histidine 138 each coordinate Fe cation. Glutamate 139 is a catalytic residue. Residue histidine 142 coordinates Fe cation.

It belongs to the polypeptide deformylase family. Requires Fe(2+) as cofactor.

It carries out the reaction N-terminal N-formyl-L-methionyl-[peptide] + H2O = N-terminal L-methionyl-[peptide] + formate. Its function is as follows. Removes the formyl group from the N-terminal Met of newly synthesized proteins. Requires at least a dipeptide for an efficient rate of reaction. N-terminal L-methionine is a prerequisite for activity but the enzyme has broad specificity at other positions. This is Peptide deformylase from Helicobacter pylori (strain HPAG1).